Reading from the N-terminus, the 363-residue chain is 3,4-dihydroxy-2-butanone 4-phosphate synthase (363 aa).

Positions 1-202 are DHBP synthase; that stretch reads MSHISPIPEI…IADLIEYRSR (202 aa). D-ribulose 5-phosphate is bound by residues 28–29, Asp33, 141–145, and Glu165; these read RE and RAGHT. Glu29 provides a ligand contact to Mg(2+). Residue His144 coordinates Mg(2+). Residues 205-363 are GTP cyclohydrolase II-like; sequence SLLEDMGNAP…EVVGFEEAEK (159 aa).

It in the N-terminal section; belongs to the DHBP synthase family. This sequence in the C-terminal section; belongs to the GTP cyclohydrolase II family. It depends on Mg(2+) as a cofactor. Mn(2+) is required as a cofactor.

It catalyses the reaction D-ribulose 5-phosphate = (2S)-2-hydroxy-3-oxobutyl phosphate + formate + H(+). It participates in cofactor biosynthesis; riboflavin biosynthesis; 2-hydroxy-3-oxobutyl phosphate from D-ribulose 5-phosphate: step 1/1. Functionally, catalyzes the conversion of D-ribulose 5-phosphate to formate and 3,4-dihydroxy-2-butanone 4-phosphate. This chain is 3,4-dihydroxy-2-butanone 4-phosphate synthase (ribB), found in Neisseria meningitidis serogroup B (strain ATCC BAA-335 / MC58).